The chain runs to 121 residues: Secretin (121 aa).

Residues 1 to 18 form the signal peptide; sequence MAPRPLLLLLLLLGGSAA. The propeptide occupies 19–26; it reads RPAPPRAR. Val54 is subject to Valine amide. Ser58 is modified (phosphoserine). A propeptide spanning residues 58–121 is cleaved from the precursor; that stretch reads SEQDAENSMA…AAAEGTLRPR (64 aa).

The protein belongs to the glucagon family.

The protein resides in the secreted. In terms of biological role, hormone involved in different processes, such as regulation of the pH of the duodenal content, food intake and water homeostasis. Exerts its biological effects by binding to secretin receptor (SCTR), a G-protein coupled receptor expressed in the basolateral domain of several cells. Acts as a key gastrointestinal hormone by regulating the pH of the duodenal content. Secreted by S cells of the duodenum in the crypts of Lieberkuehn and regulates the pH of the duodenum by (1) inhibiting the secretion of gastric acid from the parietal cells of the stomach and (2) stimulating the production of bicarbonate (NaHCO(3)) from the ductal cells of the pancreas. Production of bicarbonate is essential to neutralize the pH and ensure no damage is done to the small intestine by the gastric acid. In addition to regulating the pH of the duodenal content, plays a central role in diet induced thermogenesis: acts as a non-sympathetic brown fat (BAT) activator mediating prandial thermogenesis, which consequentially induces satiation. Mechanistically, secretin released by the gut after a meal binds to secretin receptor (SCTR) in brown adipocytes, activating brown fat thermogenesis by stimulating lipolysis, which is sensed in the brain and promotes satiation. Also able to stimulate lipolysis in white adipocytes. Also plays an important role in cellular osmoregulation: released into the systemic circulation in response to hyperosmolality and acts at different levels in the hypothalamus, pituitary and kidney to regulate water homeostasis. Also plays a role in the central nervous system, possibly by acting as a neuropeptide hormone: required for hippocampal synaptic function and neural progenitor cells maintenance. The protein is Secretin of Homo sapiens (Human).